The primary structure comprises 452 residues: MKDTIVAQATPIGRGGVGILRISGPLAQEVAKEVLGKELKPRLANYLPFKDQDGTVLDQGIALFFKAPNSFTGEDVLELQGHGGQVILDILLKRILTIKGIRIARAGEFSEQAFLNDKLDLAQAEAIADLIDATSEQAARSALKSLQGEFSNKINQLVDSVIYLRTYVEAAIDFPDEEIDFLADGKIEGHLNDTIRQLNGVRKEAKQGAILREGMKVVIAGRPNAGKSSLLNALAGREAAIVTNIAGTTRDVLREHIHIDGMPLHIIDTAGLREASDEVEKIGIQRAWDEIEQADHVLLMIDSTEQTAEAFKTEWADFLAKLPQSIPVTVIRNKVDLSGEAEGLQELDGFTLIRLSAQTKVGVDLLREHLKKSMGYQSSTEGGFLARRRHLQALETAAEHLERGHIQLTQFFAGELLAEELRMVQNALSEITGQFTSDDLLGNIFSSFCIGK.

3 residues coordinate (6S)-5-formyl-5,6,7,8-tetrahydrofolate: arginine 21, glutamate 78, and lysine 118. The region spanning 214–375 (GMKVVIAGRP…LREHLKKSMG (162 aa)) is the TrmE-type G domain. Position 224 (asparagine 224) interacts with K(+). Residues 224-229 (NAGKSS), 243-249 (TNIAGTT), and 268-271 (DTAG) each bind GTP. Serine 228 is a Mg(2+) binding site. 3 residues coordinate K(+): threonine 243, isoleucine 245, and threonine 248. A Mg(2+)-binding site is contributed by threonine 249. Residue lysine 452 coordinates (6S)-5-formyl-5,6,7,8-tetrahydrofolate.

This sequence belongs to the TRAFAC class TrmE-Era-EngA-EngB-Septin-like GTPase superfamily. TrmE GTPase family. As to quaternary structure, homodimer. Heterotetramer of two MnmE and two MnmG subunits. K(+) is required as a cofactor.

It is found in the cytoplasm. Functionally, exhibits a very high intrinsic GTPase hydrolysis rate. Involved in the addition of a carboxymethylaminomethyl (cmnm) group at the wobble position (U34) of certain tRNAs, forming tRNA-cmnm(5)s(2)U34. The sequence is that of tRNA modification GTPase MnmE from Actinobacillus pleuropneumoniae serotype 5b (strain L20).